Consider the following 141-residue polypeptide: Hemoglobin subunit alpha (141 aa).

A Globin domain is found at 1-141; it reads VLSPADKTNV…VSTVLTSKYR (141 aa). Ser3 bears the Phosphoserine mark. N6-succinyllysine is present on Lys7. The residue at position 8 (Thr8) is a Phosphothreonine. Lys11 carries the N6-succinyllysine modification. Lys16 bears the N6-acetyllysine; alternate mark. At Lys16 the chain carries N6-succinyllysine; alternate. At Tyr24 the chain carries Phosphotyrosine. Ser35 is modified (phosphoserine). Lys40 carries the N6-succinyllysine modification. The residue at position 49 (Ser49) is a Phosphoserine. His58 is a binding site for O2. His87 serves as a coordination point for heme b. Ser102 bears the Phosphoserine mark. The residue at position 108 (Thr108) is a Phosphothreonine. Ser124 carries the phosphoserine modification. Phosphothreonine is present on residues Thr134 and Thr137. Residue Ser138 is modified to Phosphoserine.

Belongs to the globin family. In terms of assembly, heterotetramer of two alpha chains and two beta chains. In terms of tissue distribution, red blood cells.

Its function is as follows. Involved in oxygen transport from the lung to the various peripheral tissues. Hemopressin acts as an antagonist peptide of the cannabinoid receptor CNR1. Hemopressin-binding efficiently blocks cannabinoid receptor CNR1 and subsequent signaling. The chain is Hemoglobin subunit alpha (HBA) from Martes foina (Beech marten).